The primary structure comprises 314 residues: Nucleotide-binding protein CE1710 (314 aa).

The segment at 1-29 is disordered; that stretch reads MNQTPGSTVPETATPVTSPASSPSAPETT. Residues 7 to 29 show a composition bias toward low complexity; sequence STVPETATPVTSPASSPSAPETT. Position 37 to 44 (37 to 44) interacts with ATP; that stretch reads GMSGAGLS. GTP is bound at residue 88–91; it reads DVRS.

It belongs to the RapZ-like family.

In terms of biological role, displays ATPase and GTPase activities. In Corynebacterium efficiens (strain DSM 44549 / YS-314 / AJ 12310 / JCM 11189 / NBRC 100395), this protein is Nucleotide-binding protein CE1710.